We begin with the raw amino-acid sequence, 250 residues long: Leucyl/phenylalanyl-tRNA--protein transferase (250 aa).

The protein belongs to the L/F-transferase family.

It is found in the cytoplasm. The catalysed reaction is N-terminal L-lysyl-[protein] + L-leucyl-tRNA(Leu) = N-terminal L-leucyl-L-lysyl-[protein] + tRNA(Leu) + H(+). The enzyme catalyses N-terminal L-arginyl-[protein] + L-leucyl-tRNA(Leu) = N-terminal L-leucyl-L-arginyl-[protein] + tRNA(Leu) + H(+). It carries out the reaction L-phenylalanyl-tRNA(Phe) + an N-terminal L-alpha-aminoacyl-[protein] = an N-terminal L-phenylalanyl-L-alpha-aminoacyl-[protein] + tRNA(Phe). In terms of biological role, functions in the N-end rule pathway of protein degradation where it conjugates Leu, Phe and, less efficiently, Met from aminoacyl-tRNAs to the N-termini of proteins containing an N-terminal arginine or lysine. The protein is Leucyl/phenylalanyl-tRNA--protein transferase of Xanthomonas oryzae pv. oryzae (strain MAFF 311018).